Here is a 105-residue protein sequence, read N- to C-terminus: Met repressor (105 aa).

It belongs to the MetJ family. Homodimer.

The protein localises to the cytoplasm. In terms of biological role, this regulatory protein, when combined with SAM (S-adenosylmethionine) represses the expression of the methionine regulon and of enzymes involved in SAM synthesis. The polypeptide is Met repressor (Haemophilus influenzae (strain PittEE)).